Reading from the N-terminus, the 269-residue chain is MATH domain and coiled-coil domain-containing protein At2g01790 (269 aa).

Positions 6–134 (AVKKLWVINN…NGEVDIVAEV (129 aa)) constitute an MATH domain. A coiled-coil region spans residues 228–269 (KLDWLEKKLKETGKSRLQEIEEDLKDLKVKCADMDALLEFLR).

The sequence is that of MATH domain and coiled-coil domain-containing protein At2g01790 from Arabidopsis thaliana (Mouse-ear cress).